Consider the following 53-residue polypeptide: Sec-independent protein translocase protein TatA (53 aa).

Residues 1–21 (MGMSVSHLLIVLLIIFVLFGA) traverse the membrane as a helical segment.

This sequence belongs to the TatA/E family. In terms of assembly, the Tat system comprises two distinct complexes: a TatABC complex, containing multiple copies of TatA, TatB and TatC subunits, and a separate TatA complex, containing only TatA subunits. Substrates initially bind to the TatABC complex, which probably triggers association of the separate TatA complex to form the active translocon.

It localises to the cell inner membrane. Part of the twin-arginine translocation (Tat) system that transports large folded proteins containing a characteristic twin-arginine motif in their signal peptide across membranes. TatA could form the protein-conducting channel of the Tat system. The chain is Sec-independent protein translocase protein TatA from Rickettsia massiliae (strain Mtu5).